The chain runs to 744 residues: Tripartite motif-containing protein 3 (744 aa).

Ala-2 is subject to N-acetylalanine. Positions 2-290 (AKREDSPGPE…LAAQAFPERP (289 aa)) are interaction with KIF21B. Phosphoserine is present on Ser-7. Residues 22 to 63 (CSICLDRYRCPKVLPCLHTFCERCLQNYIPPQSLTLSCPVCR) form an RING-type zinc finger. The B box-type zinc finger occupies 110-151 (GRPLSCPNHEGKTMEFYCEACETAMCGECRAGEHREHGTVLL). Cys-115, His-118, Cys-138, and His-143 together coordinate Zn(2+). The stretch at 153–224 (DVVEQHKAAL…RKQALVSDLE (72 aa)) forms a coiled coil. The Filamin repeat unit spans residues 317–418 (TTSATAHETV…VRGSPFRVRA (102 aa)). The tract at residues 419 to 464 (LRPGDLPPSPDDVKRRVKSPGGPGSHVRQKAVRRPSSMYSTGGKRK) is disordered. At Ser-427 the chain carries Phosphoserine. 6 NHL repeats span residues 473–516 (VFRV…FSNE), 520–563 (KFRF…FSPE), 564–605 (GKFK…FQPN), 609–652 (VGRF…YSAD), 656–699 (LFKF…FDSS), and 700–743 (GSFL…YRYL).

It belongs to the TRIM/RBCC family. Forms homooligomers. Interacts with TRIM2; this interaction reduces TRIM2 activity. Associates with myosin-Vb (MYO5B) and alpha-actinin-4 (ACTN4). Component of the CART complex, at least composed of ACTN4, HGS/HRS, MYO5B and TRIM3. Interacts with ZFYVE28/LST2. Interacts with KIF21B.

The protein resides in the cytoplasm. It localises to the early endosome. Its subcellular location is the golgi apparatus. The protein localises to the trans-Golgi network. It is found in the cell projection. The protein resides in the dendrite. It carries out the reaction S-ubiquitinyl-[E2 ubiquitin-conjugating enzyme]-L-cysteine + [acceptor protein]-L-lysine = [E2 ubiquitin-conjugating enzyme]-L-cysteine + N(6)-ubiquitinyl-[acceptor protein]-L-lysine.. Its function is as follows. E3 ubiquitin ligase that plays essential roles in neuronal functions such as regulation of neuronal plasticity, learning, and memory. In addition to its neuronal functions, participates in other biological processes such as innate immunity or cell cycle regulation. Component of the cytoskeleton-associated recycling or transport complex in neurons, polyubiquitinates gamma-actin, thus regulating neuronal plasticity, learning, and memory. Ubiquitinates postsynaptic scaffold GKAP, a neuronal substrate involved in synaptic remodeling and thereby modulates dendritic spine morphology. Positively regulates motility of microtubule-dependent motor protein KIF21B. Induces growth arrest via its RING-dependent E3 ligase activity and ubiquinates CDKN1A. Positively regulates TLR3-mediated signaling by mediating 'Lys-63'-linked polyubiquitination of TLR3. In turn, promotes the recognition and sorting of polyubiquitinated TLR3 by the ESCRT complexes. In Mus musculus (Mouse), this protein is Tripartite motif-containing protein 3 (Trim3).